Consider the following 395-residue polypeptide: Xylose isomerase (395 aa).

Catalysis depends on residues His-54 and Asp-57. 7 residues coordinate Mg(2+): Glu-181, Glu-217, His-220, Asp-245, Asp-255, Asp-257, and Asp-293.

This sequence belongs to the xylose isomerase family. Homotetramer. Requires Mg(2+) as cofactor.

Its subcellular location is the cytoplasm. It catalyses the reaction alpha-D-xylose = alpha-D-xylulofuranose. The protein is Xylose isomerase of Pseudarthrobacter chlorophenolicus (strain ATCC 700700 / DSM 12829 / CIP 107037 / JCM 12360 / KCTC 9906 / NCIMB 13794 / A6) (Arthrobacter chlorophenolicus).